The following is an 892-amino-acid chain: MQPPTGAVSGSSSSSLECVSSCRTSWRGGGRPYECSVLSCAWNAPRALTGALASTTAQCSSCSHAEAGAGWRRRGQSQRSNNSLLHITWAEGINRGKFGYGSSAHSFPTGNFFKSWSTSVDPTWRVFCYSSSESFNHISPETLWEDLKPAISYLQPEELNFVHDALKLAYEAHNGQKRRSGEPFIIHPVEVARILGEHELDWESIAAGLLHDTVEDTDMVTFERIENEFGVTVRRIVEGETKVSKLGKLQCKNEGNSKQDVKAEDLRQMFLAMTEEVRVIIVKLADRLHNMRTLTHMPQHKQYAIAMETLQVFAPLAKLLGMYRIKSELEYLSFMYMNPGDFAELKKRVEDLYKAHEQELEEANQILGEKIAEDQFLDLVSVETQVRSVCKELYSIYKTALKSKSSINEINQVAQLRIIIKPKSCNGVGPLCTAQQICYHVLGLVHGIWTPIPQAVKDYIATPKPNGYQSLHTTVIPFLNESMFHLEVQIRTEDMDLIAERGIAAHYSGRGVVSGPVRPGISSGRNSNGKVICLNNTGFALRIGWLNAIREWQEEFVGNMSSREFVDTITRDLLGSRVFVFTPKGEIKNLPKGATVVDYAYLIHTEIGNKMVAAKVNGNLVSPIHVLANAEVVEIIIYDKLSAKYAFQRHQQWLQHAKTRSARHKIMKFLREQAALSAAEITADAVNNFVADLEDESDYEQSIPSSENKDYTFNWQKILNSDKLSFGNKKSDCFLPVKNVSVPKVNGKHNKTVKELGIKINGSTFRGDSFTDFIHPGVSSSKEVLPSVDNWKAGKICAWHNTEGSSIQWLCIVCVDRKGMVAEVSSALTACGITICSCVAERDKRRGIGVMLFHFEGAYENVVSACSGVDMILGVLGWSVGCSCNPLGVLEC.

The N-terminal 52 residues, 1-52, are a transit peptide targeting the chloroplast; that stretch reads MQPPTGAVSGSSSSSLECVSSCRTSWRGGGRPYECSVLSCAWNAPRALTGAL. In terms of domain architecture, HD spans 184–291; sequence FIIHPVEVAR…VKLADRLHNM (108 aa). In terms of domain architecture, TGS spans 574–637; it reads LGSRVFVFTP…ANAEVVEIII (64 aa). An ACT domain is found at 809 to 880; that stretch reads WLCIVCVDRK…MILGVLGWSV (72 aa).

This sequence belongs to the RelA/SpoT family.

Its subcellular location is the plastid. The protein resides in the chloroplast. It carries out the reaction GTP + ATP = guanosine 3'-diphosphate 5'-triphosphate + AMP. Functionally, may be involved in a rapid plant ppGpp (guanosine 3'-diphosphate 5'-diphosphate)-mediated response to pathogens and other stresses. In Oryza sativa subsp. japonica (Rice), this protein is Putative GTP diphosphokinase RSH1, chloroplastic (RSH1).